A 404-amino-acid polypeptide reads, in one-letter code: Methionine aminopeptidase 1D, mitochondrial (404 aa).

The N-terminal 58 residues, 1-58, are a transit peptide targeting the mitochondrion; it reads MNKILKNIINKSSINNVFKTSFNGGISSSSSSSSSYLNNNNNIIKSYNVQQKQQQRYY. The interval 86–109 is disordered; the sequence is VRSQRLTKKTASPLEGMNRKERRK. Residue His-232 participates in substrate binding. 3 residues coordinate a divalent metal cation: Asp-249, Asp-260, and His-323. His-330 contacts substrate. Positions 355 and 389 each coordinate a divalent metal cation.

This sequence belongs to the peptidase M24A family. Methionine aminopeptidase type 1 subfamily. Co(2+) serves as cofactor. It depends on Zn(2+) as a cofactor. Mn(2+) is required as a cofactor. The cofactor is Fe(2+).

It localises to the mitochondrion. The enzyme catalyses Release of N-terminal amino acids, preferentially methionine, from peptides and arylamides.. Its function is as follows. Removes the N-terminal methionine from nascent proteins. The N-terminal methionine is often cleaved when the second residue in the primary sequence is small and uncharged (Met-Ala-, Cys, Gly, Pro, Ser, Thr, or Val). This chain is Methionine aminopeptidase 1D, mitochondrial (metap1d), found in Dictyostelium discoideum (Social amoeba).